Here is a 240-residue protein sequence, read N- to C-terminus: Protein UL20 homolog (240 aa).

4 consecutive transmembrane segments (helical) span residues V76 to Y96, L104 to L124, G147 to I167, and V203 to G225.

The protein belongs to the alphaherpesvirinae UL20 family. As to quaternary structure, interacts with gK (via N-terminus); this interaction plays a role in the coordinate transport of UL20 and gK to the trans-Golgi network (TGN), and is required for their cell surface expression. Interacts with gB. Interacts with host STING1; this interaction inhibits host interferon-beta promoter activation.

The protein resides in the virion. Its subcellular location is the host cell membrane. The protein localises to the host endosome membrane. It localises to the host Golgi apparatus membrane. It is found in the host nucleus membrane. Functionally, plays an essential role in egress of virus particles from the nucleus, cytoplasmic envelopment and virus-induced cell fusion. Forms a functional protein complex with gK and this interaction is absolutely essential for their coordinate intracellular transport, gK glycosylation, expression on host cell surface, and function. Together, they modulate gB-mediated virus-induced cell fusion and virion egress and therefore actively participate in these processes. In addition, plays a role in inhibiting the type I interferon responses by suppressing STING1-mediated activation of the IFN-beta promoter. This Homo sapiens (Human) protein is Protein UL20 homolog (39).